The primary structure comprises 159 residues: 2-C-methyl-D-erythritol 2,4-cyclodiphosphate synthase (159 aa).

A divalent metal cation contacts are provided by Asp10 and His12. 4-CDP-2-C-methyl-D-erythritol 2-phosphate contacts are provided by residues 10 to 12 (DVH) and 36 to 37 (HS). An a divalent metal cation-binding site is contributed by His44. 4-CDP-2-C-methyl-D-erythritol 2-phosphate is bound by residues 58–60 (DIG), 134–137 (TTSE), Phe141, and Arg144.

The protein belongs to the IspF family. Homotrimer. It depends on a divalent metal cation as a cofactor.

It carries out the reaction 4-CDP-2-C-methyl-D-erythritol 2-phosphate = 2-C-methyl-D-erythritol 2,4-cyclic diphosphate + CMP. It participates in isoprenoid biosynthesis; isopentenyl diphosphate biosynthesis via DXP pathway; isopentenyl diphosphate from 1-deoxy-D-xylulose 5-phosphate: step 4/6. In terms of biological role, involved in the biosynthesis of isopentenyl diphosphate (IPP) and dimethylallyl diphosphate (DMAPP), two major building blocks of isoprenoid compounds. Catalyzes the conversion of 4-diphosphocytidyl-2-C-methyl-D-erythritol 2-phosphate (CDP-ME2P) to 2-C-methyl-D-erythritol 2,4-cyclodiphosphate (ME-CPP) with a corresponding release of cytidine 5-monophosphate (CMP). This chain is 2-C-methyl-D-erythritol 2,4-cyclodiphosphate synthase, found in Cereibacter sphaeroides (strain ATCC 17025 / ATH 2.4.3) (Rhodobacter sphaeroides).